Consider the following 426-residue polypeptide: Serine--tRNA ligase (426 aa).

233 to 235 is a binding site for L-serine; it reads TAE. 264 to 266 lines the ATP pocket; the sequence is RSE. Residue Glu-287 coordinates L-serine. Residue 351-354 coordinates ATP; the sequence is EISS. An L-serine-binding site is contributed by Ser-387.

Belongs to the class-II aminoacyl-tRNA synthetase family. Type-1 seryl-tRNA synthetase subfamily. In terms of assembly, homodimer. The tRNA molecule binds across the dimer.

It localises to the cytoplasm. The catalysed reaction is tRNA(Ser) + L-serine + ATP = L-seryl-tRNA(Ser) + AMP + diphosphate + H(+). It catalyses the reaction tRNA(Sec) + L-serine + ATP = L-seryl-tRNA(Sec) + AMP + diphosphate + H(+). It functions in the pathway aminoacyl-tRNA biosynthesis; selenocysteinyl-tRNA(Sec) biosynthesis; L-seryl-tRNA(Sec) from L-serine and tRNA(Sec): step 1/1. In terms of biological role, catalyzes the attachment of serine to tRNA(Ser). Is also able to aminoacylate tRNA(Sec) with serine, to form the misacylated tRNA L-seryl-tRNA(Sec), which will be further converted into selenocysteinyl-tRNA(Sec). The polypeptide is Serine--tRNA ligase (Pseudomonas savastanoi pv. phaseolicola (strain 1448A / Race 6) (Pseudomonas syringae pv. phaseolicola (strain 1448A / Race 6))).